Consider the following 203-residue polypeptide: Tic20 family protein Ycf60 (203 aa).

The next 5 membrane-spanning stretches (helical) occupy residues 2–22 (IRLF…RLAL), 51–71 (TVPY…YVLP), 84–104 (IILP…VTFF), 131–151 (ILLF…PIEF), and 153–173 (ISFL…STIT).

The protein belongs to the Tic20 family.

It is found in the plastid. The protein resides in the chloroplast membrane. The polypeptide is Tic20 family protein Ycf60 (ycf60) (Pyropia yezoensis (Susabi-nori)).